The following is a 272-amino-acid chain: Bis(5'-nucleosyl)-tetraphosphatase, symmetrical (272 aa).

It belongs to the Ap4A hydrolase family.

The catalysed reaction is P(1),P(4)-bis(5'-adenosyl) tetraphosphate + H2O = 2 ADP + 2 H(+). In terms of biological role, hydrolyzes diadenosine 5',5'''-P1,P4-tetraphosphate to yield ADP. This is Bis(5'-nucleosyl)-tetraphosphatase, symmetrical from Shewanella frigidimarina (strain NCIMB 400).